The following is a 779-amino-acid chain: Cysteine-rich protein 2-binding protein (779 aa).

Residues 1-34 (MDSSIHLSGLLSRHDDDATRTSTSEGLEEGEVEG) form a disordered region. Position 4 is a phosphoserine (S4). At K230 the chain carries N6-acetyllysine. Disordered regions lie at residues 247-292 (SRNP…PVKF), 314-345 (LSSS…HSAT), and 360-457 (PPQA…GPRY). The span at 255–275 (MELKEKRSRTQEAKDIRRAQK) shows a compositional bias: basic and acidic residues. The residue at position 284 (S284) is a Phosphoserine. K291 carries the post-translational modification N6-acetyllysine. The segment covering 314-334 (LSSSDRTPLTSPSPSPSLDFS) has biased composition (low complexity). 2 stretches are compositionally biased toward basic and acidic residues: residues 402 to 423 (RAPE…RMDG) and 443 to 452 (KPPLEKDMKP). Position 413 is a phosphoserine (S413). Positions 635-779 (LDYCYVRPNH…KHAFFLRLRR (145 aa)) constitute an N-acetyltransferase domain.

Interacts with the LIM 1 domain of CSRP2. Component of the ADA2A-containing complex (ATAC), composed of CSRP2BP, KAT2A, TADA2L, TADA3L, ZZ3, MBIP, WDR5, YEATS2, CCDC101 and DR1. In the complex, it probably interacts directly with KAT2A, MBIP and WDR5.

Its subcellular location is the nucleus. It localises to the cytoplasm. In terms of biological role, component of the ATAC complex, a complex with histone acetyltransferase activity on histones H3 and H4. May function as a scaffold for the ATAC complex to promote ATAC complex stability. Has also weak histone acetyltransferase activity toward histone H4. Required for the normal progression through G1 and G2/M phases of the cell cycle. The polypeptide is Cysteine-rich protein 2-binding protein (Mus musculus (Mouse)).